The chain runs to 911 residues: Gag-Pro polyprotein (911 aa).

A propeptide spanning residues 101–161 (AAVAQTEEIL…TKKPKRFPVL (61 aa)) is cleaved from the precursor. Composition is skewed to polar residues over residues 113 to 125 (NSQTDLTKTSQNP) and 140 to 152 (KSSSLQDKGLSST). Residues 113-178 (NSQTDLTKTS…DPEDPNPSEV (66 aa)) are disordered. The short motif at 202-205 (PPPY) is the PPXY motif element. The PTAP/PSAP motif signature appears at 210 to 213 (PSAP). A coiled-coil region spans residues 216–257 (MAVVNPKEELKEKIAQLEEQIKLEELHQALISKLQKLKTGNE). The disordered stretch occupies residues 260-279 (THPDTAGGLSRTPHWPGQHI). CCHC-type zinc fingers lie at residues 547-564 (GCCFKCGKKGHFAKNCHE) and 576-593 (GLCPRCKRGKHWANECKS). The tract at residues 592–626 (KSKTDNQGNPIPPHQGNRVEGPAPGPETSLWGSQL) is disordered. Positions 780-856 (FTGLIDTGAD…LPVNLWGRDL (77 aa)) constitute a Peptidase A2 domain. Aspartate 785 serves as the catalytic Protease; shared with dimeric partner. Residues 867 to 911 (PNDIVTAQMLAQGYSPGKGLGKKENGILHPIPNQGQSNKKGFGNF) enclose the G-patch domain.

Homodimer. In terms of assembly, interacts with the reverse transcriptase/ribonuclease H. As to quaternary structure, homotrimer. Post-translationally, released by autocatalytic processing. The protease can undergo further autoprocessing to yield 2 shorter but enzymatically active forms of 12 kDa and 13 kDa without the GDP domain. the 12 kDa form is monomeric. In terms of processing, myristoylated. Myristoylation of the matrix (MA) domain mediates the transport and binding of Gag polyproteins to the host plasma membrane and is required for the assembly of viral particles. Specific enzymatic cleavages in vivo yield mature proteins.

The protein resides in the virion. The catalysed reaction is dUTP + H2O = dUMP + diphosphate + H(+). Matrix protein. Functionally, nucleocapsid protein p14: Nucleocapsid protein. In terms of biological role, capsid protein. Its function is as follows. The aspartyl protease mediates proteolytic cleavages of Gag and Gag-Pol polyproteins during or shortly after the release of the virion from the plasma membrane. Cleavages take place as an ordered, step-wise cascade to yield mature proteins. This process is called maturation. Displays maximal activity during the budding process just prior to particle release from the cell. Enhances the activity of the reverse transcriptase. May be part of the mature RT. In Mason-Pfizer monkey virus (MPMV), this protein is Gag-Pro polyprotein (gag-pro).